The primary structure comprises 395 residues: MLPAVGSVDEEEDPAEEDCPELVPIETTQSEEEEKSGLGAKIPVTIITGYLGAGKTTLLNYILTEQHSKRVAVILNESGEGSALEKSLAVSQGGELYEEWLELRNGCLCCSVKDNGLRAIENLMQKKGKFDDILLETTGLADPGAVTSMFWVDAELGSDIYLDGIITIVDSKYGLKHLTEEKPDGLINEATRQVALADIILINKTDLVPEEDVKKLRTTIRSINGLGQILETQRSRVDLSNVLDLHAFDSLSGISLQKKLQHVPGTQPHLDQSIVTITFEVPGNAKEEHLNMFIQNLLWEKNVRNKDNHCMEVIRLKGLVSIKDKSQQVIVQGVHELYDLEETPVSWKDDTERTNRLVLIGRNLDKDILKQLFIATVTETEKQWTTHFKEDQVCT.

The interval 1–22 (MLPAVGSVDEEEDPAEEDCPEL) is disordered. The segment covering 8-20 (VDEEEDPAEEDCP) has biased composition (acidic residues). The psi-PxLVp motif motif lies at 17–24 (EDCPELVP). 49-56 (GYLGAGKT) is a GTP binding site. 3 residues coordinate Zn(2+): cysteine 107, cysteine 109, and cysteine 110. The short motif at 107–110 (CLCC) is the CXCC motif element. Residues 110-114 (CSVKD) and 203-206 (NKTD) contribute to the GTP site. The CobW C-terminal domain occupies 274-377 (IVTITFEVPG…ILKQLFIATV (104 aa)).

The protein belongs to the SIMIBI class G3E GTPase family. ZNG1 subfamily.

The protein localises to the nucleus. It catalyses the reaction GTP + H2O = GDP + phosphate + H(+). Functionally, zinc chaperone that directly transfers zinc cofactor to target metalloproteins, thereby activating them. Catalyzes zinc insertion into the active site of methionine aminopeptidase METAP1, which function to cleave the initiator methionine from polypeptides during or after protein translation. Mechanistically, the N-terminal psi-PxLVp motif binds to the C6H2-type zinc finger of inactive form of METAP1. After formation of the docked complex, zinc is transferred from the CXCC motif in the GTPase domain of ZNG1E to the zinc binding site in the peptidase domain of METAP1 in a process requiring GTP hydrolysis. GTP/GDP exchange is required for release of active METAP1. The protein is Zinc-regulated GTPase metalloprotein activator 1E of Homo sapiens (Human).